The chain runs to 144 residues: Transcription antitermination protein NusB (144 aa).

This sequence belongs to the NusB family.

Its function is as follows. Involved in transcription antitermination. Required for transcription of ribosomal RNA (rRNA) genes. Binds specifically to the boxA antiterminator sequence of the ribosomal RNA (rrn) operons. This is Transcription antitermination protein NusB from Paraburkholderia xenovorans (strain LB400).